Here is a 344-residue protein sequence, read N- to C-terminus: MTQSQQSHRKDEHVFLAEKYFQSVAHAGFDQVRLLHRALPETTMAAVDLKPDLPFNWQWPIYINAMTGGSPQTGKLNAQLGQLAQALGVAIASGSQSVALRDPQLVPTFATLRDHDPNGFILANVGAGHHATAAEAAVAMLKANALEIHLNAAQEVIMPEGDRDFMWQANIKSIIATSQVPIVVKEVGNGFIREDLQSLQQLGVQFVDVGGRGGTNFATIENARRSGHDFAYLQDWGQTTVESLLEARGLGLAMLATGGVRSPLDVVKALRLGAHAVGMSGLVLHHLIQTGYEATLAYFQNFLHQLRQLYALLGVTNWQELQEAPIVLSADLEHYRQARGLPGI.

9–10 provides a ligand contact to substrate; sequence RK. FMN-binding positions include 65-67, serine 95, and asparagine 124; that span reads AMT. A substrate-binding site is contributed by glutamine 154. Glutamate 155 is a Mg(2+) binding site. Residues lysine 185, threonine 215, 259 to 261, and 280 to 281 each bind FMN; these read GVR and SG.

It belongs to the IPP isomerase type 2 family. Homooctamer. Dimer of tetramers. The cofactor is FMN. NADPH serves as cofactor. Requires Mg(2+) as cofactor.

The protein localises to the cytoplasm. The catalysed reaction is isopentenyl diphosphate = dimethylallyl diphosphate. In terms of biological role, involved in the biosynthesis of isoprenoids. Catalyzes the 1,3-allylic rearrangement of the homoallylic substrate isopentenyl (IPP) to its allylic isomer, dimethylallyl diphosphate (DMAPP). The sequence is that of Isopentenyl-diphosphate delta-isomerase from Lacticaseibacillus casei (strain BL23) (Lactobacillus casei).